The primary structure comprises 307 residues: Acyl transferase (307 aa).

Catalysis depends on charge relay system residues serine 116, aspartate 213, and histidine 243.

It belongs to the LuxD family.

Its pathway is lipid metabolism; fatty acid reduction for biolumincescence. Its function is as follows. Acyl transferase is part of the fatty acid reductase system required for aldehyde biosynthesis; it produces fatty acids for the luminescent reaction. The protein is Acyl transferase of Photorhabdus luminescens (Xenorhabdus luminescens).